Reading from the N-terminus, the 66-residue chain is Large ribosomal subunit protein bL28 (66 aa).

The interval 1-26 (MAKDAITGARTRFGNQRSHALNSSRR) is disordered. A compositionally biased stretch (polar residues) spans 13-25 (FGNQRSHALNSSR).

Belongs to the bacterial ribosomal protein bL28 family.

In Leuconostoc mesenteroides subsp. mesenteroides (strain ATCC 8293 / DSM 20343 / BCRC 11652 / CCM 1803 / JCM 6124 / NCDO 523 / NBRC 100496 / NCIMB 8023 / NCTC 12954 / NRRL B-1118 / 37Y), this protein is Large ribosomal subunit protein bL28.